Consider the following 563-residue polypeptide: TSET complex member tstC (563 aa).

5 disordered regions span residues 146–170 (SPHQ…SFIT), 192–213 (NSLS…NNDS), 235–298 (VLNS…NYNN), 376–395 (HPNA…NEFK), and 428–563 (GSAS…FLNF). Residues 379–395 (AGKEAKEKEKEKENEFK) are compositionally biased toward basic and acidic residues. Residues 428–459 (GSASSKSSPSTSPLSSSYNPSSPETSENSFSA) are compositionally biased toward low complexity. Over residues 460-473 (TPISDSNSLKNSID) the composition is skewed to polar residues. 2 stretches are compositionally biased toward low complexity: residues 474 to 487 (NNNN…NNNN) and 507 to 543 (NNSK…SSAA). Polar residues predominate over residues 552–563 (NSAKTKMNFLNF).

Component of the TSET complex, a heterohexamer composed of tstA, tstB, tstC, tstD, tstE and tstF, which may act in plasma membrane turnover. tstA, tstB, tstC and tstD are likely to be the core complex members with tstE and tstF acting as associated scaffold proteins.

The protein is TSET complex member tstC of Dictyostelium discoideum (Social amoeba).